We begin with the raw amino-acid sequence, 234 residues long: Small ribosomal subunit protein uS2 (234 aa).

The protein belongs to the universal ribosomal protein uS2 family.

The protein is Small ribosomal subunit protein uS2 of Prochlorococcus marinus (strain MIT 9515).